Reading from the N-terminus, the 341-residue chain is Protein pelota homolog (341 aa).

It belongs to the eukaryotic release factor 1 family. Pelota subfamily. As to quaternary structure, monomer. A divalent metal cation is required as a cofactor.

The protein resides in the cytoplasm. May function in recognizing stalled ribosomes, interact with stem-loop structures in stalled mRNA molecules, and effect endonucleolytic cleavage of the mRNA. May play a role in the release non-functional ribosomes and degradation of damaged mRNAs. Has endoribonuclease activity. This Sulfurisphaera tokodaii (strain DSM 16993 / JCM 10545 / NBRC 100140 / 7) (Sulfolobus tokodaii) protein is Protein pelota homolog.